We begin with the raw amino-acid sequence, 675 residues long: UvrABC system protein B (675 aa).

The region spanning 30–417 (SGIEQGNRNQ…SDQIVEQVVR (388 aa)) is the Helicase ATP-binding domain. 43-50 (GVTGSGKT) is a binding site for ATP. The Beta-hairpin motif lies at 96–119 (YYDYYQPEAYVPSSDTFIEKDAAI). Residues 434–601 (QVDDVLSEIN…AVRQKVKEID (168 aa)) enclose the Helicase C-terminal domain. The UVR domain occupies 637-672 (AKHMSKLEKEMLKASKELQFEQAARLRDEILRLKAQ).

It belongs to the UvrB family. In terms of assembly, forms a heterotetramer with UvrA during the search for lesions. Interacts with UvrC in an incision complex.

Its subcellular location is the cytoplasm. Its function is as follows. The UvrABC repair system catalyzes the recognition and processing of DNA lesions. A damage recognition complex composed of 2 UvrA and 2 UvrB subunits scans DNA for abnormalities. Upon binding of the UvrA(2)B(2) complex to a putative damaged site, the DNA wraps around one UvrB monomer. DNA wrap is dependent on ATP binding by UvrB and probably causes local melting of the DNA helix, facilitating insertion of UvrB beta-hairpin between the DNA strands. Then UvrB probes one DNA strand for the presence of a lesion. If a lesion is found the UvrA subunits dissociate and the UvrB-DNA preincision complex is formed. This complex is subsequently bound by UvrC and the second UvrB is released. If no lesion is found, the DNA wraps around the other UvrB subunit that will check the other stand for damage. The chain is UvrABC system protein B from Acinetobacter baylyi (strain ATCC 33305 / BD413 / ADP1).